A 145-amino-acid chain; its full sequence is Acidic phospholipase A2 S1-11 (145 aa).

Positions 1-19 are cleaved as a signal peptide; the sequence is MYPAHLLVLLAVCVSLLGA. Positions 20-27 are excised as a propeptide; sequence SDMPPQPL. Disulfide bonds link cysteine 38–cysteine 99, cysteine 54–cysteine 144, cysteine 56–cysteine 72, cysteine 71–cysteine 127, and cysteine 106–cysteine 118. Tyrosine 55, glycine 57, and glycine 59 together coordinate Ca(2+). Histidine 75 is an active-site residue. Aspartate 76 is a Ca(2+) binding site. The active site involves aspartate 121.

This sequence belongs to the phospholipase A2 family. Group I subfamily. D49 sub-subfamily. It depends on Ca(2+) as a cofactor. Post-translationally, this enzyme lacks two of the seven disulfide bonds found in similar PLA2 proteins. As to expression, expressed by the venom gland.

The protein resides in the secreted. It carries out the reaction a 1,2-diacyl-sn-glycero-3-phosphocholine + H2O = a 1-acyl-sn-glycero-3-phosphocholine + a fatty acid + H(+). Its function is as follows. Snake venom phospholipase A2 (PLA2) that inhibits collagen-induced platelet aggregation. PLA2 catalyzes the calcium-dependent hydrolysis of the 2-acyl groups in 3-sn-phosphoglycerides. This is Acidic phospholipase A2 S1-11 from Austrelaps superbus (Lowland copperhead snake).